The primary structure comprises 407 residues: Arginine deiminase (407 aa).

Residue cysteine 397 is the Amidino-cysteine intermediate of the active site.

The protein belongs to the arginine deiminase family.

Its subcellular location is the cytoplasm. The enzyme catalyses L-arginine + H2O = L-citrulline + NH4(+). It functions in the pathway amino-acid degradation; L-arginine degradation via ADI pathway; carbamoyl phosphate from L-arginine: step 1/2. The protein is Arginine deiminase of Escherichia coli O81 (strain ED1a).